The sequence spans 579 residues: Mycobactin import ATP-binding/permease protein IrtB (579 aa).

At 1–16 (MIRTWIALVPNDHRAR) the chain is on the cytoplasmic side. The chain crosses the membrane as a helical span at residues 17-37 (LIGFALLAFCSVVARAVGTVL). One can recognise an ABC transmembrane type-1 domain in the interval 17-299 (LIGFALLAFC…VSELAPALES (283 aa)). Residues 38-52 (LVPLMAALFGEAPQR) lie on the Periplasmic side of the membrane. Residues 53 to 73 (AWLWLGWLSAATVAGWVLDAV) form a helical membrane-spanning segment. Residues 74–123 (TARIGIELGFAVLNHTQHDVADRLPVVRLDWFTAENTATARQAIAATGPE) lie on the Cytoplasmic side of the membrane. A helical membrane pass occupies residues 124-146 (LVGLVVNLVTPLTSAILLPAVIA). Topologically, residues 147 to 155 (LALLPISWQ) are periplasmic. Residues 156 to 178 (LGVAALAGVPLLLGALWASAAFA) form a helical membrane-spanning segment. The Cytoplasmic segment spans residues 179-237 (RRADTAADKANTALTERIIEFARTQQALRAARRVEPARSLVGNALASQHTATMRLLGMQ). The chain crosses the membrane as a helical span at residues 238–258 (IPGQLLFSIASQLALIVLAGT). Residues 259 to 579 (TAALTITGTL…EAAEWQILAE (321 aa)) lie on the Periplasmic side of the membrane. One can recognise an ABC transporter domain in the interval 332–567 (IEFDDVAFGY…GGRFSQFWRQ (236 aa)). Position 366-373 (366-373 (GPSGCGKS)) interacts with ATP.

Belongs to the ABC transporter superfamily. Siderophore-Fe(3+) uptake transporter (SIUT) (TC 3.A.1.21) family. Forms a heterodimer with IrtA.

The protein localises to the cell inner membrane. Functionally, part of the ABC transporter complex IrtAB involved in the import of iron-bound mycobactin (Fe-MBT) and carboxymycobactin (Fe-cMBT). Transmembrane domains (TMD) form a pore in the membrane and the ATP-binding domain (NBD) is responsible for energy generation. This Mycobacterium bovis (strain ATCC BAA-935 / AF2122/97) protein is Mycobactin import ATP-binding/permease protein IrtB (irtB).